We begin with the raw amino-acid sequence, 66 residues long: Large ribosomal subunit protein bL33c (66 aa).

As to quaternary structure, component of the chloroplast large ribosomal subunit (LSU). Mature 70S chloroplast ribosomes of higher plants consist of a small (30S) and a large (50S) subunit. The 30S small subunit contains 1 molecule of ribosomal RNA (16S rRNA) and 24 different proteins. The 50S large subunit contains 3 rRNA molecules (23S, 5S and 4.5S rRNA) and 33 different proteins.

Its subcellular location is the plastid. The protein localises to the chloroplast. Its function is as follows. Component of the chloroplast ribosome (chloro-ribosome), a dedicated translation machinery responsible for the synthesis of chloroplast genome-encoded proteins, including proteins of the transcription and translation machinery and components of the photosynthetic apparatus. The sequence is that of Large ribosomal subunit protein bL33c (rpl33) from Spinacia oleracea (Spinach).